The chain runs to 404 residues: Cysteine desulfurase IscS (404 aa).

Pyridoxal 5'-phosphate-binding positions include 75-76 (AT), Asn-155, Gln-183, and 203-205 (SAH). An N6-(pyridoxal phosphate)lysine modification is found at Lys-206. Thr-243 provides a ligand contact to pyridoxal 5'-phosphate. Cys-328 functions as the Cysteine persulfide intermediate in the catalytic mechanism. Residue Cys-328 participates in [2Fe-2S] cluster binding.

It belongs to the class-V pyridoxal-phosphate-dependent aminotransferase family. NifS/IscS subfamily. In terms of assembly, homodimer. Forms a heterotetramer with IscU, interacts with other sulfur acceptors. The cofactor is pyridoxal 5'-phosphate.

It localises to the cytoplasm. The catalysed reaction is (sulfur carrier)-H + L-cysteine = (sulfur carrier)-SH + L-alanine. The protein operates within cofactor biosynthesis; iron-sulfur cluster biosynthesis. In terms of biological role, master enzyme that delivers sulfur to a number of partners involved in Fe-S cluster assembly, tRNA modification or cofactor biosynthesis. Catalyzes the removal of elemental sulfur atoms from cysteine to produce alanine. Functions as a sulfur delivery protein for Fe-S cluster synthesis onto IscU, an Fe-S scaffold assembly protein, as well as other S acceptor proteins. In Vibrio vulnificus (strain YJ016), this protein is Cysteine desulfurase IscS.